The primary structure comprises 256 residues: MTKRIRLGVNIDHVATIRNARGGIHPDPVRAAQLAAHAGADGITTHLREDRRHISDDDLINLEKGITLPLNLEMAATEEMLEIALQHRPHAVCLVPEKREEQTTEGGLDAAGQIDSLKPIVAKLLAAGIRVSLFIEPDETQIRAAKALNAPVIELHTGHYANSVNEELAAELIRIEQAAKLAKSLNIEVHAGHGLTYENVIPIAALEEIAELNIGHFLIGEAIFIGLEASIKRMRYLMDAARAEDKVDFLVKHIAL.

Asn10 is a 3-amino-2-oxopropyl phosphate binding site. 12–13 (DH) contacts 1-deoxy-D-xylulose 5-phosphate. Arg21 contributes to the 3-amino-2-oxopropyl phosphate binding site. The active-site Proton acceptor is His46. Arg48 and His53 together coordinate 1-deoxy-D-xylulose 5-phosphate. Glu73 acts as the Proton acceptor in catalysis. Thr103 is a 1-deoxy-D-xylulose 5-phosphate binding site. His193 functions as the Proton donor in the catalytic mechanism. 3-amino-2-oxopropyl phosphate-binding positions include Gly194 and 215–216 (GH).

This sequence belongs to the PNP synthase family. In terms of assembly, homooctamer; tetramer of dimers.

It localises to the cytoplasm. It carries out the reaction 3-amino-2-oxopropyl phosphate + 1-deoxy-D-xylulose 5-phosphate = pyridoxine 5'-phosphate + phosphate + 2 H2O + H(+). The protein operates within cofactor biosynthesis; pyridoxine 5'-phosphate biosynthesis; pyridoxine 5'-phosphate from D-erythrose 4-phosphate: step 5/5. Functionally, catalyzes the complicated ring closure reaction between the two acyclic compounds 1-deoxy-D-xylulose-5-phosphate (DXP) and 3-amino-2-oxopropyl phosphate (1-amino-acetone-3-phosphate or AAP) to form pyridoxine 5'-phosphate (PNP) and inorganic phosphate. The protein is Pyridoxine 5'-phosphate synthase of Zymomonas mobilis subsp. mobilis (strain ATCC 31821 / ZM4 / CP4).